The chain runs to 391 residues: Chaperone protein DnaJ (391 aa).

A J domain is found at 4-68 (DFYDVLGVSR…ETRQQYDQLG (65 aa)). The segment covering 53-79 (DVLTDEETRQQYDQLGHERFEEAEKRG) has biased composition (basic and acidic residues). 2 disordered regions span residues 53–94 (DVLT…MGGA) and 117–136 (FFGG…EQGR). 2 stretches are compositionally biased toward gly residues: residues 81–94 (TGNG…MGGA) and 119–129 (GGAGGGGGRGR). Residues 152–234 (GVSKQVTVRR…CGGQGQTRER (83 aa)) form a CR-type zinc finger. Residues Cys-165, Cys-168, Cys-182, Cys-185, Cys-208, Cys-211, Cys-222, and Cys-225 each contribute to the Zn(2+) site. CXXCXGXG motif repeat units lie at residues 165–172 (CADCGGSG), 182–189 (CPQCDGQG), 208–215 (CSRCGGEG), and 222–229 (CSTCGGQG).

Belongs to the DnaJ family. Homodimer. It depends on Zn(2+) as a cofactor.

The protein localises to the cytoplasm. In terms of biological role, participates actively in the response to hyperosmotic and heat shock by preventing the aggregation of stress-denatured proteins and by disaggregating proteins, also in an autonomous, DnaK-independent fashion. Unfolded proteins bind initially to DnaJ; upon interaction with the DnaJ-bound protein, DnaK hydrolyzes its bound ATP, resulting in the formation of a stable complex. GrpE releases ADP from DnaK; ATP binding to DnaK triggers the release of the substrate protein, thus completing the reaction cycle. Several rounds of ATP-dependent interactions between DnaJ, DnaK and GrpE are required for fully efficient folding. Also involved, together with DnaK and GrpE, in the DNA replication of plasmids through activation of initiation proteins. The polypeptide is Chaperone protein DnaJ (Halobacterium salinarum (strain ATCC 29341 / DSM 671 / R1)).